Reading from the N-terminus, the 301-residue chain is Oxygen-dependent coproporphyrinogen-III oxidase (301 aa).

Serine 90 is a substrate binding site. A divalent metal cation-binding residues include histidine 94 and histidine 104. The Proton donor role is filled by histidine 104. 106–108 (NVR) provides a ligand contact to substrate. Histidine 143 and histidine 173 together coordinate a divalent metal cation. Residues 238 to 273 (YVEFNLVWDRGTLFGLQSGGRTESILMSLPPIVKWR) form an important for dimerization region. 256–258 (GGR) serves as a coordination point for substrate.

It belongs to the aerobic coproporphyrinogen-III oxidase family. In terms of assembly, homodimer. Requires a divalent metal cation as cofactor.

The protein localises to the cytoplasm. The catalysed reaction is coproporphyrinogen III + O2 + 2 H(+) = protoporphyrinogen IX + 2 CO2 + 2 H2O. The protein operates within porphyrin-containing compound metabolism; protoporphyrin-IX biosynthesis; protoporphyrinogen-IX from coproporphyrinogen-III (O2 route): step 1/1. Its function is as follows. Involved in the heme biosynthesis. Catalyzes the aerobic oxidative decarboxylation of propionate groups of rings A and B of coproporphyrinogen-III to yield the vinyl groups in protoporphyrinogen-IX. In Nitrosomonas eutropha (strain DSM 101675 / C91 / Nm57), this protein is Oxygen-dependent coproporphyrinogen-III oxidase.